Here is a 435-residue protein sequence, read N- to C-terminus: Dual specificity mitogen-activated protein kinase kinase jkk-1 (435 aa).

Residues 35–49 (RDRRSTSVDQKHKEC) are compositionally biased toward basic and acidic residues. The interval 35 to 90 (RDRRSTSVDQKHKECSSTSSSPQHQRPNNIGYLTSPMERKFTPLSMKPSPSRRDTE) is disordered. The span at 50–66 (SSTSSSPQHQRPNNIGY) shows a compositional bias: polar residues. Residues 122–385 (IHIISLLGSG…YRQLMKHDFY (264 aa)) enclose the Protein kinase domain. ATP contacts are provided by residues 128 to 136 (LGSGSCGVV) and K149. D246 (proton acceptor) is an active-site residue.

The protein belongs to the protein kinase superfamily. STE Ser/Thr protein kinase family. MAP kinase kinase subfamily. As to quaternary structure, interacts with unc-16. Mg(2+) is required as a cofactor. As to expression, expressed in most neurons, including nerve ring, head ganglions, dorsal and ventral nerve cords and tail ganglions.

The protein localises to the cytoplasm. It localises to the perikaryon. Its subcellular location is the cell projection. It is found in the axon. It carries out the reaction L-seryl-[protein] + ATP = O-phospho-L-seryl-[protein] + ADP + H(+). The catalysed reaction is L-threonyl-[protein] + ATP = O-phospho-L-threonyl-[protein] + ADP + H(+). It catalyses the reaction L-tyrosyl-[protein] + ATP = O-phospho-L-tyrosyl-[protein] + ADP + H(+). Dual specificity protein kinase which acts as an essential component of the JNK signal transduction pathway. May phosphorylate jnk-1. Plays a role in coordinating locomotion via D-type GABAergic motoneurons and in regulating synaptic vesicle transport downstream of adapter protein unc-16 and probably by activating jnk-1. Positively regulates lifespan. Upon environmental stress such as heat stress regulates daf-16 nuclear translocation probably by activating jnk-1. Regulates germline cell apoptosis in response to heavy metals such as Cu(2+) and to arsenite. The protein is Dual specificity mitogen-activated protein kinase kinase jkk-1 of Caenorhabditis elegans.